The following is a 716-amino-acid chain: Cyclic nucleotide-gated ion channel 1 (716 aa).

Residues 1-97 (MNFRQEKFVR…QGPFLQRWNK (97 aa)) lie on the Cytoplasmic side of the membrane. The helical transmembrane segment at 98–118 (IFVLACIIAVSLDPLFFYVPI) threads the bilayer. Residues 119–132 (IDDAKKCLGIDKKM) lie on the Extracellular side of the membrane. A helical membrane pass occupies residues 133–153 (EITASVLRSFTDVFYVLHIIF). At 154 to 187 (QFRTGFIAPSSRVFGRGVLVEDKREIAKRYLSSH) the chain is on the cytoplasmic side. Residues 188–208 (FIIDILAVLPLPQMVILIIIP) form a helical membrane-spanning segment. Over 209–220 (HMRGSSSLNTKN) the chain is Extracellular. Residues 221–241 (MLKFIVFFQYIPRFIRIYPLY) traverse the membrane as a helical segment. Residues 242-259 (KEVTRTSGILTETAWAGA) are Cytoplasmic-facing. The helical transmembrane segment at 260–280 (AFNLFLYMLASHVFGAFWYLF) threads the bilayer. Over 281–379 (SIERETVCWK…GQNLKTSTYI (99 aa)) the chain is Extracellular. Residues 380-400 (WEICFAVFISIAGLVLFSFLI) traverse the membrane as a helical segment. Over 401–716 (GNMQTYLQST…PAEPDFNSDD (316 aa)) the chain is Cytoplasmic. A nucleoside 3',5'-cyclic phosphate contacts are provided by residues 486-610 (MFEK…SKQL) and Glu-557. A calmodulin-binding region spans residues 602–617 (FRRLHSKQLRHTFRYY). The 30-residue stretch at 622 to 651 (KTWAACFIQAAWRRYIKKKLEESLKEEENR) folds into the IQ domain. Residues 689-716 (SVRKPRMPERMPPMLLQKPAEPDFNSDD) are disordered.

It belongs to the cyclic nucleotide-gated cation channel (TC 1.A.1.5) family. As to quaternary structure, homotetramer or heterotetramer (Potential). Binds calmodulin-2/3/5 with a higher affinity than calmodulin-1/4. Expressed in the whole plant but only weakly in roots.

It is found in the cell membrane. Functionally, acts as a cyclic nucleotide-gated ion channel. Can be activated by cyclic AMP which leads to an opening of the cation channel. May be responsible for cAMP-induced calcium entry in cells and thus should be involved in the calcium signal transduction. Could transport K(+), Na(+) and Pb(2+). The sequence is that of Cyclic nucleotide-gated ion channel 1 (CNGC1) from Arabidopsis thaliana (Mouse-ear cress).